Reading from the N-terminus, the 437-residue chain is Integrase (437 aa).

The region spanning 73 to 158 (WTVERWLTHW…TARTAFGEAY (86 aa)) is the Core-binding (CB) domain. Residues 179–428 (EEVEPLEVED…DSVRNDVADR (250 aa)) form the Tyr recombinase domain. Active-site residues include Arg214, Lys245, His379, Arg382, and Trp405. Tyr414 acts as the O-(3'-phospho-DNA)-tyrosine intermediate in catalysis.

Belongs to the 'phage' integrase family.

Is a recombinase (or integrase), catalyzing the cutting and rejoining of the recombining DNA molecules. This Saccharopolyspora erythraea (Streptomyces erythraeus) protein is Integrase (int).